A 120-amino-acid polypeptide reads, in one-letter code: MDYEFLRDVTGVVKVRMSMGHEVIGHWFNEEVKENLALLDEVEDAARTLKGSERSWQRAGHEYTLWMDGEEVMVRANQLEFAGDEMEEGMNYYDEESLSLCGVEDFLQVVAAYRNFVQQK.

This sequence belongs to the UPF0231 family.

This chain is UPF0231 protein YacL, found in Escherichia coli (strain SMS-3-5 / SECEC).